The following is a 368-amino-acid chain: Proteinase-activated receptor 3 (368 aa).

A signal peptide spans 1–21 (MEMKVLILVGVRLLFLPTTVC). Residues 22-37 (QSGMKHVSDNSALTAE) constitute a propeptide, removed for receptor activation. The Extracellular portion of the chain corresponds to 38 to 93 (SFNGNEHSFEEFPLSDIEGWTGATTTIKAKCPEESITTLHVNNATMGYLRSSLSTK). Residue asparagine 80 is glycosylated (N-linked (GlcNAc...) asparagine). Residues 94–114 (VIPAIYILVFVIGVPANIVTL) form a helical membrane-spanning segment. Residues 115–123 (WKLSSRTKS) lie on the Cytoplasmic side of the membrane. A helical membrane pass occupies residues 124–144 (ICLVIFHTNLAIADLLFCVTL). Over 145-166 (PFKIAYHLNGNDWVFGEVMCRV) the chain is Extracellular. A disulfide bridge links cysteine 164 with cysteine 243. The helical transmembrane segment at 167–187 (TTVAFYGNMYCAILILTCMGI) threads the bilayer. At 188–208 (NRYLATVHPFTYRKLPKRNFT) the chain is on the cytoplasmic side. Residues 209–229 (LLMCGVVWVMVVLYMLPLAIL) form a helical membrane-spanning segment. Residues 230-257 (KQEYHLVQPGITTCHDVHDTCESPLPFQ) lie on the Extracellular side of the membrane. Residues 258-278 (FYYFVSLAFFGFLIPFVVSVF) traverse the membrane as a helical segment. Topologically, residues 279–300 (CYTTLIHKLNAQDRKWLRYIKA) are cytoplasmic. The helical transmembrane segment at 301–321 (VLLILVIFTICFAPTNIILII) threads the bilayer. Residues 322 to 338 (HHANYYYSNTDSLYFMY) are Extracellular-facing. Residues 339–359 (LIALCLGSLNSCLDPFLYFIM) form a helical membrane-spanning segment. Topologically, residues 360 to 368 (SKIVDQLTS) are cytoplasmic.

This sequence belongs to the G-protein coupled receptor 1 family. Interacts with INSC/inscuteable and GPSM2. Post-translationally, a proteolytic cleavage generates a new N-terminus that functions as a tethered ligand.

The protein resides in the cell membrane. Its function is as follows. Receptor for activated thrombin coupled to G proteins that stimulate phosphoinositide hydrolysis. The sequence is that of Proteinase-activated receptor 3 (F2rl2) from Rattus norvegicus (Rat).